The following is a 151-amino-acid chain: Centrin-A (151 aa).

EF-hand domains follow at residues 80 to 115 (DVYA…LGEA) and 116 to 151 (RSDS…KKIY). 10 residues coordinate Ca(2+): Asp-93, Asp-95, Ser-97, Tyr-99, Asp-104, Asp-129, Asn-131, Asp-133, Lys-135, and Glu-140.

The protein belongs to the centrin family.

It localises to the cytoplasm. Its subcellular location is the cytoskeleton. The protein localises to the microtubule organizing center. It is found in the centrosome. The protein resides in the nucleus. In terms of biological role, plays a fundamental role in microtubule-organizing center structure and function. The polypeptide is Centrin-A (cenA) (Dictyostelium discoideum (Social amoeba)).